A 558-amino-acid chain; its full sequence is Zeta-carotene desaturase, chloroplastic/chromoplastic (558 aa).

A chloroplast and chromoplast-targeting transit peptide spans 1-27; it reads MASSVVFAATGSLSVPPLKSRRFYVNS.

This sequence belongs to the zeta carotene desaturase family. Decylplastoquinone is required as a cofactor. Requires 6-decylubiquinone as cofactor. Highly expressed in leaves. Expressed at low levels in flowers and siliques.

It is found in the plastid. It localises to the chloroplast. The protein localises to the chromoplast. The catalysed reaction is 9,9'-di-cis-zeta-carotene + 2 a quinone = 7,7',9,9'-tetra-cis-lycopene + 2 a quinol. The protein operates within carotenoid biosynthesis; lycopene biosynthesis. Its function is as follows. Plays a crucial role in plant growth and development. Is essential for the biosynthesis of carotenoids. Carotenoids are involved in different physiological processes, including coloration, photoprotection, biosynthesis of abscisic acid (ABA) and chloroplast biogenesis. Catalyzes the conversion of zeta-carotene to lycopene via the intermediary of neurosporene. It carries out two consecutive desaturations (introduction of double bonds) at positions C-7 and C-7'. Shows stereoselectivity toward trans C15-C15'zeta-carotene double bond. The zeta-carotene produced by the phytoene desaturase PDS has a C15-C15' double bond in the cis configuration and it requires isomerization before being recognized as substrate by ZDS. The main product is 7,9,7',9'-tetra-cis-lycopene (pro-lycopene). This Arabidopsis thaliana (Mouse-ear cress) protein is Zeta-carotene desaturase, chloroplastic/chromoplastic.